Here is a 979-residue protein sequence, read N- to C-terminus: Pimaradiene synthase pbcA (979 aa).

The VYDTAW motif signature appears at 34–39; sequence VYDTAW. The DXDD B-type cyclization motif motif lies at 328-331; sequence DADD. Residues aspartate 665, glutamate 669, asparagine 865, aspartate 866, serine 869, and aspartate 873 each contribute to the Mg(2+) site. Residues 665–669 carry the DEXXE A-type cyclization motif motif; the sequence is DEFME.

This sequence belongs to the terpene synthase family. The cofactor is Mg(2+).

It carries out the reaction (2E,6E,10E)-geranylgeranyl diphosphate = ent-copalyl diphosphate. The catalysed reaction is ent-copalyl diphosphate = ent-pimara-8(14),15-diene + diphosphate. It participates in secondary metabolite biosynthesis; terpenoid biosynthesis. Bifunctional terpene synthase; part of the gene cluster that mediates the biosynthesis of the diterpene ent-pimara-8(14),15-diene (PD). Within the cluster, the HMG-CoA reductase AN1593 functions in the mevalonate pathway, which produces isoprenoid precursors. The geranylgeranyl pyrophosphate (GGPP) synthase AN1592 is needed in the formation of GGPP, the precursor for diterpenes. Lastly, the pimaradiene synthase pbcA performs the 2 cyclization steps that convert GGPP to ent-pimara-8(14),15-diene with ent-copalyl diphosphate as an intermediate. The putative roles of the remaining cluster enzymes in ent-pimara-8(14),15-diene biosynthesis is unclear. The cytochrome P450 monooxygenase AN1598, the glutathione S-transferase AN1595, the oxidoreductases AN1596 and AN1597 probably function as decorative enzymes. It is possible that in biological conditions the compound is oxidized to ent-pimara-8(14),15-dien-19-oic acid, which is a bioactive diterpene compound predominant in many plant extracts. This is Pimaradiene synthase pbcA from Emericella nidulans (strain FGSC A4 / ATCC 38163 / CBS 112.46 / NRRL 194 / M139) (Aspergillus nidulans).